Reading from the N-terminus, the 81-residue chain is Large ribosomal subunit protein bL27 (81 aa).

Positions 1-22 (MAHKTGQSSSSNGRESKSKRLG) are disordered.

This sequence belongs to the bacterial ribosomal protein bL27 family.

This is Large ribosomal subunit protein bL27 from Opitutus terrae (strain DSM 11246 / JCM 15787 / PB90-1).